Here is a 227-residue protein sequence, read N- to C-terminus: Lipoprotein-releasing system ATP-binding protein LolD (227 aa).

An ABC transporter domain is found at 7-227 (LSCRNLGKSY…RLEGGRLVEA (221 aa)). ATP is bound at residue 43–50 (GTSGSGKS).

The protein belongs to the ABC transporter superfamily. Lipoprotein translocase (TC 3.A.1.125) family. As to quaternary structure, the complex is composed of two ATP-binding proteins (LolD) and two transmembrane proteins (LolC and LolE).

The protein resides in the cell inner membrane. In terms of biological role, part of the ABC transporter complex LolCDE involved in the translocation of mature outer membrane-directed lipoproteins, from the inner membrane to the periplasmic chaperone, LolA. Responsible for the formation of the LolA-lipoprotein complex in an ATP-dependent manner. This is Lipoprotein-releasing system ATP-binding protein LolD from Pseudomonas syringae pv. tomato (strain ATCC BAA-871 / DC3000).